Consider the following 523-residue polypeptide: Type 2 DNA topoisomerase 6 subunit B (523 aa).

ATP-binding positions include asparagine 48, aspartate 80, 101-102 (SK), 110-117 (GQQGLGCS), and lysine 436.

Belongs to the TOP6B family. As to quaternary structure, homodimer. Heterotetramer of two Top6A and two Top6B chains.

It carries out the reaction ATP-dependent breakage, passage and rejoining of double-stranded DNA.. Functionally, relaxes both positive and negative superturns and exhibits a strong decatenase activity. This Methanothermobacter thermautotrophicus (strain ATCC 29096 / DSM 1053 / JCM 10044 / NBRC 100330 / Delta H) (Methanobacterium thermoautotrophicum) protein is Type 2 DNA topoisomerase 6 subunit B.